The sequence spans 381 residues: Anhydro-N-acetylmuramic acid kinase (381 aa).

13 to 20 (GTSLDGID) contributes to the ATP binding site.

The protein belongs to the anhydro-N-acetylmuramic acid kinase family.

It catalyses the reaction 1,6-anhydro-N-acetyl-beta-muramate + ATP + H2O = N-acetyl-D-muramate 6-phosphate + ADP + H(+). Its pathway is amino-sugar metabolism; 1,6-anhydro-N-acetylmuramate degradation. It participates in cell wall biogenesis; peptidoglycan recycling. Its function is as follows. Catalyzes the specific phosphorylation of 1,6-anhydro-N-acetylmuramic acid (anhMurNAc) with the simultaneous cleavage of the 1,6-anhydro ring, generating MurNAc-6-P. Is required for the utilization of anhMurNAc either imported from the medium or derived from its own cell wall murein, and thus plays a role in cell wall recycling. This chain is Anhydro-N-acetylmuramic acid kinase, found in Francisella tularensis subsp. novicida (strain U112).